The primary structure comprises 942 residues: UvrABC system protein A (942 aa).

32–39 contacts ATP; it reads GLSGSGKS. The C4-type zinc-finger motif lies at 251–278; the sequence is CPVCGFTVPELEPRLFSFNAPFGSCPTC. ABC transporter domains lie at 308 to 589 and 609 to 937; these read WNPI…KKSI and GNGR…HYLK. 641-648 is a binding site for ATP; the sequence is GVSGSGKS. The C4-type zinc finger occupies 740 to 766; that stretch reads CEACSGDGIIKIEMHFLPDVYVPCEVC.

The protein belongs to the ABC transporter superfamily. UvrA family. Forms a heterotetramer with UvrB during the search for lesions.

The protein localises to the cytoplasm. The UvrABC repair system catalyzes the recognition and processing of DNA lesions. UvrA is an ATPase and a DNA-binding protein. A damage recognition complex composed of 2 UvrA and 2 UvrB subunits scans DNA for abnormalities. When the presence of a lesion has been verified by UvrB, the UvrA molecules dissociate. This is UvrABC system protein A from Streptococcus pyogenes serotype M1.